Reading from the N-terminus, the 702-residue chain is Methionine--tRNA ligase (702 aa).

Residues 14–24 (PYANGPVHLGH) carry the 'HIGH' region motif. Residues C146, C149, C159, and C162 each coordinate Zn(2+). A 'KMSKS' region motif is present at residues 344-348 (KFSKS). ATP is bound at residue K347. Positions 601–702 (DFQKVDLRAA…GEKINGSSVQ (102 aa)) constitute a tRNA-binding domain.

Belongs to the class-I aminoacyl-tRNA synthetase family. MetG type 1 subfamily. Homodimer. Zn(2+) is required as a cofactor.

The protein resides in the cytoplasm. The enzyme catalyses tRNA(Met) + L-methionine + ATP = L-methionyl-tRNA(Met) + AMP + diphosphate. In terms of biological role, is required not only for elongation of protein synthesis but also for the initiation of all mRNA translation through initiator tRNA(fMet) aminoacylation. In Chlorobium phaeovibrioides (strain DSM 265 / 1930) (Prosthecochloris vibrioformis (strain DSM 265)), this protein is Methionine--tRNA ligase.